A 439-amino-acid polypeptide reads, in one-letter code: Xaa-Pro dipeptidase (439 aa).

Residues Asp-244, Asp-255, His-335, Glu-380, and Glu-419 each coordinate Mn(2+).

Belongs to the peptidase M24B family. Bacterial-type prolidase subfamily. It depends on Mn(2+) as a cofactor.

The enzyme catalyses Xaa-L-Pro dipeptide + H2O = an L-alpha-amino acid + L-proline. Functionally, splits dipeptides with a prolyl residue in the C-terminal position. This is Xaa-Pro dipeptidase from Shewanella amazonensis (strain ATCC BAA-1098 / SB2B).